Here is a 227-residue protein sequence, read N- to C-terminus: Cytochrome c oxidase subunit 2 (227 aa).

The Mitochondrial intermembrane segment spans residues 1–14; the sequence is MAYPFQLGLQDATS. A helical membrane pass occupies residues 15–45; sequence PIMEELLHFHDHTLMIVFLISSLVLYIISSM. Residues 46–59 lie on the Mitochondrial matrix side of the membrane; that stretch reads LTTKLTHTSTMDAQ. The chain crosses the membrane as a helical span at residues 60 to 87; that stretch reads EVETVWTILPAIILVLIALPSLRILYMM. Over 88 to 227 the chain is Mitochondrial intermembrane; it reads DEINNPSLTV…YFETWSALML (140 aa). Cu cation contacts are provided by His-161, Cys-196, Glu-198, Cys-200, His-204, and Met-207. Glu-198 lines the Mg(2+) pocket. Tyr-218 carries the phosphotyrosine modification.

The protein belongs to the cytochrome c oxidase subunit 2 family. In terms of assembly, component of the cytochrome c oxidase (complex IV, CIV), a multisubunit enzyme composed of 14 subunits. The complex is composed of a catalytic core of 3 subunits MT-CO1, MT-CO2 and MT-CO3, encoded in the mitochondrial DNA, and 11 supernumerary subunits COX4I, COX5A, COX5B, COX6A, COX6B, COX6C, COX7A, COX7B, COX7C, COX8 and NDUFA4, which are encoded in the nuclear genome. The complex exists as a monomer or a dimer and forms supercomplexes (SCs) in the inner mitochondrial membrane with NADH-ubiquinone oxidoreductase (complex I, CI) and ubiquinol-cytochrome c oxidoreductase (cytochrome b-c1 complex, complex III, CIII), resulting in different assemblies (supercomplex SCI(1)III(2)IV(1) and megacomplex MCI(2)III(2)IV(2)). Found in a complex with TMEM177, COA6, COX18, COX20, SCO1 and SCO2. Interacts with TMEM177 in a COX20-dependent manner. Interacts with COX20. Interacts with COX16. Cu cation is required as a cofactor.

The protein localises to the mitochondrion inner membrane. It carries out the reaction 4 Fe(II)-[cytochrome c] + O2 + 8 H(+)(in) = 4 Fe(III)-[cytochrome c] + 2 H2O + 4 H(+)(out). Component of the cytochrome c oxidase, the last enzyme in the mitochondrial electron transport chain which drives oxidative phosphorylation. The respiratory chain contains 3 multisubunit complexes succinate dehydrogenase (complex II, CII), ubiquinol-cytochrome c oxidoreductase (cytochrome b-c1 complex, complex III, CIII) and cytochrome c oxidase (complex IV, CIV), that cooperate to transfer electrons derived from NADH and succinate to molecular oxygen, creating an electrochemical gradient over the inner membrane that drives transmembrane transport and the ATP synthase. Cytochrome c oxidase is the component of the respiratory chain that catalyzes the reduction of oxygen to water. Electrons originating from reduced cytochrome c in the intermembrane space (IMS) are transferred via the dinuclear copper A center (CU(A)) of subunit 2 and heme A of subunit 1 to the active site in subunit 1, a binuclear center (BNC) formed by heme A3 and copper B (CU(B)). The BNC reduces molecular oxygen to 2 water molecules using 4 electrons from cytochrome c in the IMS and 4 protons from the mitochondrial matrix. This chain is Cytochrome c oxidase subunit 2 (MT-CO2), found in Speothos venaticus (Bush dog).